We begin with the raw amino-acid sequence, 207 residues long: MIRGRIMRKFLILSMLIFTTLCGCVDFSSSNSNGYYHDSWSYNNYTSFVDTHEHYYGKVVKVVDGDTVYVEVNGELWKIRLLGVDTPEIHKRNNPYEYYLLNGTPITDTKYLKEWGYKAKHFAEKELKNKTVIIVFDNEAPKKDKYGRYLAYIFINNSNNLINFNEELLKYGYARVYISNFELKDEFLNVEREAKENRVGLWNWSNN.

Active-site residues include Arg80, Glu88, and Arg148.

It belongs to the thermonuclease family.

This is an uncharacterized protein from Methanocaldococcus jannaschii (strain ATCC 43067 / DSM 2661 / JAL-1 / JCM 10045 / NBRC 100440) (Methanococcus jannaschii).